The sequence spans 211 residues: Cytochrome c biogenesis ATP-binding export protein CcmA 2 (211 aa).

The ABC transporter domain maps to 6–208 (LEARELGVRR…GAVLDLATDA (203 aa)). Position 38-45 (38-45 (GPNGAGKT)) interacts with ATP.

It belongs to the ABC transporter superfamily. CcmA exporter (TC 3.A.1.107) family. The complex is composed of two ATP-binding proteins (CcmA) and two transmembrane proteins (CcmB).

It is found in the cell inner membrane. It catalyses the reaction heme b(in) + ATP + H2O = heme b(out) + ADP + phosphate + H(+). Functionally, part of the ABC transporter complex CcmAB involved in the biogenesis of c-type cytochromes; once thought to export heme, this seems not to be the case, but its exact role is uncertain. Responsible for energy coupling to the transport system. The protein is Cytochrome c biogenesis ATP-binding export protein CcmA 2 of Cupriavidus metallidurans (strain ATCC 43123 / DSM 2839 / NBRC 102507 / CH34) (Ralstonia metallidurans).